Here is a 266-residue protein sequence, read N- to C-terminus: Early E1A protein (266 aa).

The interval 39–47 (MSLHEMYDL) is interaction with RB1 in competition with E2F1. The PXLXP motif, interaction with host ZMYND11 motif lies at 94–98 (PELQP). The LXCXE motif, interaction with host RB1 motif lies at 103-107 (LFCYE). A zinc finger lies at 160–180 (CSSCDYHRKTSGCPEILCSLC). Residues 193 to 244 (VSDSEPDEPDSTTADSNHGSPPTLRCTPPRDLPRPVPVKASPGKRPAVNSLH) form a disordered region. Positions 203–212 (STTADSNHGS) are enriched in polar residues. The PXDLS motif, CTBP-binding motif lies at 255–259 (PLDLS). Residues 261 to 265 (KRSRS) carry the Nuclear localization signal motif.

This sequence belongs to the adenoviridae E1A protein family. In terms of assembly, interacts with host UBE2I; this interaction interferes with polySUMOylation. Interacts with host RB1; this interaction induces the aberrant dissociation of RB1-E2F1 complex thereby disrupting the activity of RB1 and activating E2F1-regulated genes. Interacts with host ATF7; the interaction enhances ATF7-mediated viral transactivation activity which requires the zinc binding domains of both proteins. Isoform early E1A 32 kDa protein and isoform early E1A 26 kDa protein interact (via N-terminus) with CUL1 and E3 ubiquitin ligase RBX1; these interactions inhibit RBX1-CUL1-dependent elongation reaction of ubiquitin chains and attenuate ubiquitination of SCF(FBXW7) target proteins. Interacts (via PXLXP motif) with host ZMYND11/BS69 (via MYND-type zinc finger); this interaction inhibits E1A mediated transactivation. Interacts with host EP300; this interaction stimulates the acetylation of RB1 by recruiting EP300 and RB1 into a multimeric-protein complex. Interacts with host CTBP1 and CTBP2; this interaction seems to potentiate viral replication. Interacts with host DCAF7. Interacts with host DYRK1A. Interacts with host KPNA4; this interaction allows E1A import into the host nucleus. Interacts with host EP400; this interaction stabilizes MYC. Interacts with host TBP protein; this interaction probably disrupts the TBP-TATA complex.

The protein localises to the host nucleus. Plays a role in viral genome replication by driving entry of quiescent cells into the cell cycle. Stimulation of progression from G1 to S phase allows the virus to efficiently use the cellular DNA replicating machinery to achieve viral genome replication. E1A protein has both transforming and trans-activating activities. Induces the disassembly of the E2F1 transcription factor from RB1 by direct competition for the same binding site on RB1, with subsequent transcriptional activation of E2F1-regulated S-phase genes and of the E2 region of the adenoviral genome. Release of E2F1 leads to the ARF-mediated inhibition of MDM2 and causes TP53/p53 to accumulate because it is not targeted for degradation by MDM2-mediated ubiquitination anymore. This increase in TP53, in turn, would arrest the cell proliferation and direct its death but this effect is counteracted by the viral protein E1B-55K. Inactivation of the ability of RB1 to arrest the cell cycle is critical for cellular transformation, uncontrolled cellular growth and proliferation induced by viral infection. Interaction with RBX1 and CUL1 inhibits ubiquitination of the proteins targeted by SCF(FBXW7) ubiquitin ligase complex, and may be linked to unregulated host cell proliferation. The tumorigenesis-restraining activity of E1A may be related to the disruption of the host CtBP-CtIP complex through the CtBP binding motif. This chain is Early E1A protein, found in Simian adenovirus serotype 7 (SAdV-7).